The chain runs to 249 residues: 5'-nucleotidase SurE (249 aa).

A divalent metal cation-binding residues include D9, D10, S40, and N92.

Belongs to the SurE nucleotidase family. Requires a divalent metal cation as cofactor.

It is found in the cytoplasm. It carries out the reaction a ribonucleoside 5'-phosphate + H2O = a ribonucleoside + phosphate. Functionally, nucleotidase that shows phosphatase activity on nucleoside 5'-monophosphates. The chain is 5'-nucleotidase SurE from Shewanella frigidimarina (strain NCIMB 400).